Here is a 196-residue protein sequence, read N- to C-terminus: Chromophore lyase CpcS/CpeS 2 (196 aa).

The protein belongs to the CpcS/CpeS biliprotein lyase family.

Its function is as follows. Covalently attaches a chromophore to Cys residue(s) of phycobiliproteins. This Trichodesmium erythraeum (strain IMS101) protein is Chromophore lyase CpcS/CpeS 2.